A 125-amino-acid polypeptide reads, in one-letter code: Napin-3 (125 aa).

Intrachain disulfides connect Cys-10/Cys-62, Cys-23/Cys-51, Cys-52/Cys-107, and Cys-64/Cys-115.

The protein belongs to the 2S seed storage albumins family. The mature protein consists of a small and a large chain linked by disulfide bonds.

Functionally, the small, basic, water-soluble napins are one of the two major kinds of storage proteins synthesized in the seed during its maturation. The sequence is that of Napin-3 from Brassica napus (Rape).